We begin with the raw amino-acid sequence, 771 residues long: U-box domain-containing protein 6 (771 aa).

In terms of domain architecture, U-box spans 274–348 (IPPEELRCPI…ASWCEQNGIT (75 aa)). The tract at residues 394–415 (EESSTIESERQQKEKNNAPDEV) is disordered. A compositionally biased stretch (basic and acidic residues) spans 400–411 (ESERQQKEKNNA). 5 ARM repeats span residues 456–499 (EEAR…NLAV), 502–542 (NRNK…CLEK), 544–581 (KPVI…NLST), 583–622 (SPNI…NLAS), and 625–664 (EGKE…ILCT). A compositionally biased stretch (basic and acidic residues) spans 706-722 (EQRHRDQPSPNKEEAPR). The disordered stretch occupies residues 706-751 (EQRHRDQPSPNKEEAPRKTVSAPMAIPAPVSAPESEVKPLTKSISR).

It catalyses the reaction S-ubiquitinyl-[E2 ubiquitin-conjugating enzyme]-L-cysteine + [acceptor protein]-L-lysine = [E2 ubiquitin-conjugating enzyme]-L-cysteine + N(6)-ubiquitinyl-[acceptor protein]-L-lysine.. It participates in protein modification; protein ubiquitination. Its function is as follows. Functions as an E3 ubiquitin ligase. This is U-box domain-containing protein 6 (PUB6) from Arabidopsis thaliana (Mouse-ear cress).